We begin with the raw amino-acid sequence, 192 residues long: NADH-quinone oxidoreductase subunit B 1 (192 aa).

The [4Fe-4S] cluster site is built by C71, C72, C136, and C166.

The protein belongs to the complex I 20 kDa subunit family. In terms of assembly, NDH-1 is composed of 14 different subunits. Subunits NuoB, C, D, E, F, and G constitute the peripheral sector of the complex. [4Fe-4S] cluster serves as cofactor.

It localises to the cell inner membrane. It carries out the reaction a quinone + NADH + 5 H(+)(in) = a quinol + NAD(+) + 4 H(+)(out). NDH-1 shuttles electrons from NADH, via FMN and iron-sulfur (Fe-S) centers, to quinones in the respiratory chain. The immediate electron acceptor for the enzyme in this species is believed to be ubiquinone. Couples the redox reaction to proton translocation (for every two electrons transferred, four hydrogen ions are translocated across the cytoplasmic membrane), and thus conserves the redox energy in a proton gradient. This Rhizobium meliloti (strain 1021) (Ensifer meliloti) protein is NADH-quinone oxidoreductase subunit B 1.